A 372-amino-acid chain; its full sequence is B2 bradykinin receptor (372 aa).

At 1–34 (MFNITSQVSALNATLAQGNSCLDAEWWSWLNTIQ) the chain is on the extracellular side. Asn3 and Asn12 each carry an N-linked (GlcNAc...) asparagine glycan. The helical transmembrane segment at 35–58 (APFLWVLFVLAVLENIFVLSVFFL) threads the bilayer. Over 59-67 (HKSSCTVAE) the chain is Cytoplasmic. Residues 68–92 (IYLGNLAVADLILAFGLPFWAITIA) form a helical membrane-spanning segment. Residues 93–105 (NNFDWLFGEVLCR) lie on the Extracellular side of the membrane. A disulfide bond links Cys104 and Cys185. The chain crosses the membrane as a helical span at residues 106–127 (MVNTMIQMNMYSSICFLMLVSI). Topologically, residues 128–149 (DRYLALVKTMSMGRMRGVRWAK) are cytoplasmic. Position 130 is a phosphotyrosine (Tyr130). Residues 150–172 (LYSLVIWGCALLLSSPMLVFRTM) traverse the membrane as a helical segment. Residues 173–195 (KDYRDEGHNVTACLIIYPSLTWQ) lie on the Extracellular side of the membrane. A glycan (N-linked (GlcNAc...) asparagine) is linked at Asn181. A helical membrane pass occupies residues 196–222 (VFTNVLLNLVGFLLPLSIITFCTVQIM). Over 223–241 (QVLRNNEMQKFKEIQTERR) the chain is Cytoplasmic. The chain crosses the membrane as a helical span at residues 242-266 (ATVLVLAVLLLFVVCWLPFQIGTFL). Residues 267 to 284 (DTLRLLGFLPGCWEHVID) lie on the Extracellular side of the membrane. A helical transmembrane segment spans residues 285-308 (LITQISSYLAYSNSCLNPLVYVIV). The Cytoplasmic segment spans residues 309–364 (GKRFRKKSREVYHGLCRSGGCVSEPAQSENSMGTLRTSISVDRQIHKLQDWARSSS). At Tyr320 the chain carries Phosphotyrosine. A lipid anchor (S-palmitoyl cysteine) is attached at Cys324. Ser339 bears the Phosphoserine mark. Phosphothreonine is present on Thr342. A phosphoserine; by GRK6 mark is found at Ser346 and Ser348.

This sequence belongs to the G-protein coupled receptor 1 family. Bradykinin receptor subfamily. BDKRB2 sub-subfamily. As to quaternary structure, forms a complex with PECAM1 and GNAQ. Interacts with PECAM1.

The protein localises to the cell membrane. Functionally, receptor for bradykinin. It is associated with G proteins that activate a phosphatidylinositol-calcium second messenger system. The chain is B2 bradykinin receptor (BDKRB2) from Cavia porcellus (Guinea pig).